The following is a 469-amino-acid chain: Protein HEAT STRESS TOLERANT DWD 1 (469 aa).

Over residues 1 to 15 (MGRNVKTKAKRKNKK) the composition is skewed to basic residues. Disordered regions lie at residues 1–29 (MGRNVKTKAKRKNKKKAEASSSEIPSIPT) and 115–150 (DVVPKTFGNGEDEDEDDEDDSDSDDDDGDEASKTPN). Positions 124-143 (GEDEDEDDEDDSDSDDDDGD) are enriched in acidic residues. WD repeat units follow at residues 157–197 (AHHG…NALA), 221–261 (GHKD…WAVD), 267–307 (GHTA…SPAL), 311–351 (AHNA…GGDA), 358–398 (YHKH…DEEE), and 425–464 (QGQKDLKELHWHNQIPGMIISTAGDGFNILMPYNIQNTLP).

The protein belongs to the WD repeat RBAP46/RBAP48/MSI1 family. As to quaternary structure, probable component of CULLIN4 (CUL4) RING ligase (CRL4) complexes. Interacts with DDB1A and DDB1B. Associates with HSP90-1.

It functions in the pathway protein modification; protein ubiquitination. Probable substrate receptor of CRL4 E3 ligase complexes acting as negative regulators of thermotolerance by disturbing the action of HSP90-1 and by preventing the expression of heat-inducible genes (e.g. HSP14.7, HSP21, At2g03020 and WRKY28). This chain is Protein HEAT STRESS TOLERANT DWD 1, found in Arabidopsis thaliana (Mouse-ear cress).